Here is a 304-residue protein sequence, read N- to C-terminus: N-acetyl-D-glucosamine kinase (304 aa).

Residues 4–11 and 133–140 contribute to the ATP site; these read GFDMGGTK and GVGGGLIV. Residues histidine 157, cysteine 177, cysteine 179, and cysteine 184 each coordinate Zn(2+).

Belongs to the ROK (NagC/XylR) family. NagK subfamily.

It catalyses the reaction N-acetyl-D-glucosamine + ATP = N-acetyl-D-glucosamine 6-phosphate + ADP + H(+). The protein operates within cell wall biogenesis; peptidoglycan recycling. Its function is as follows. Catalyzes the phosphorylation of N-acetyl-D-glucosamine (GlcNAc) derived from cell-wall degradation, yielding GlcNAc-6-P. The protein is N-acetyl-D-glucosamine kinase of Yersinia pseudotuberculosis serotype O:1b (strain IP 31758).